The primary structure comprises 304 residues: Ornithine carbamoyltransferase (304 aa).

Carbamoyl phosphate-binding positions include S53–T56, Q80, R104, and H131–Q134. Residues N162, D219, and S223–M224 each bind L-ornithine. Carbamoyl phosphate contacts are provided by residues C259–L260 and R287.

The protein belongs to the aspartate/ornithine carbamoyltransferase superfamily. OTCase family.

It localises to the cytoplasm. The catalysed reaction is carbamoyl phosphate + L-ornithine = L-citrulline + phosphate + H(+). It functions in the pathway amino-acid biosynthesis; L-arginine biosynthesis; L-arginine from L-ornithine and carbamoyl phosphate: step 1/3. Reversibly catalyzes the transfer of the carbamoyl group from carbamoyl phosphate (CP) to the N(epsilon) atom of ornithine (ORN) to produce L-citrulline. The sequence is that of Ornithine carbamoyltransferase from Nitrosococcus oceani (strain ATCC 19707 / BCRC 17464 / JCM 30415 / NCIMB 11848 / C-107).